A 644-amino-acid polypeptide reads, in one-letter code: Biosynthetic arginine decarboxylase (644 aa).

Lys-100 carries the post-translational modification N6-(pyridoxal phosphate)lysine. Substrate is bound at residue 282–292; that stretch reads CDVGGGLAIDY.

Belongs to the Orn/Lys/Arg decarboxylase class-II family. SpeA subfamily. Mg(2+) serves as cofactor. Pyridoxal 5'-phosphate is required as a cofactor.

The catalysed reaction is L-arginine + H(+) = agmatine + CO2. Functionally, catalyzes the biosynthesis of agmatine from arginine. This chain is Biosynthetic arginine decarboxylase, found in Gloeobacter violaceus (strain ATCC 29082 / PCC 7421).